Reading from the N-terminus, the 155-residue chain is Histone H2B.4 (155 aa).

The segment covering 1-28 (MAPKTKEEKPASEAVEPKAEAKPKAEKA) has biased composition (basic and acidic residues). Residues 1 to 62 (MAPKTKEEKP…GDKKKKKAKV (62 aa)) form a disordered region. The segment covering 29-40 (PKKKEKKAPAKK) has biased composition (basic residues). K151 participates in a covalent cross-link: Glycyl lysine isopeptide (Lys-Gly) (interchain with G-Cter in ubiquitin).

It belongs to the histone H2B family. The nucleosome is a histone octamer containing two molecules each of H2A, H2B, H3 and H4 assembled in one H3-H4 heterotetramer and two H2A-H2B heterodimers. The octamer wraps approximately 147 bp of DNA. Post-translationally, monoubiquitinated to form H2BK143ub1; may give a specific tag for epigenetic transcriptional activation.

It is found in the nucleus. The protein localises to the chromosome. Core component of nucleosome. Nucleosomes wrap and compact DNA into chromatin, limiting DNA accessibility to the cellular machineries which require DNA as a template. Histones thereby play a central role in transcription regulation, DNA repair, DNA replication and chromosomal stability. DNA accessibility is regulated via a complex set of post-translational modifications of histones, also called histone code, and nucleosome remodeling. The sequence is that of Histone H2B.4 from Volvox carteri (Green alga).